A 307-amino-acid chain; its full sequence is Aspartate carbamoyltransferase catalytic subunit (307 aa).

Carbamoyl phosphate-binding residues include R54 and T55. K83 serves as a coordination point for L-aspartate. 3 residues coordinate carbamoyl phosphate: R104, H132, and Q135. Residues R165 and R228 each coordinate L-aspartate. L267 and P268 together coordinate carbamoyl phosphate.

This sequence belongs to the aspartate/ornithine carbamoyltransferase superfamily. ATCase family. Heterododecamer (2C3:3R2) of six catalytic PyrB chains organized as two trimers (C3), and six regulatory PyrI chains organized as three dimers (R2).

It catalyses the reaction carbamoyl phosphate + L-aspartate = N-carbamoyl-L-aspartate + phosphate + H(+). It participates in pyrimidine metabolism; UMP biosynthesis via de novo pathway; (S)-dihydroorotate from bicarbonate: step 2/3. In terms of biological role, catalyzes the condensation of carbamoyl phosphate and aspartate to form carbamoyl aspartate and inorganic phosphate, the committed step in the de novo pyrimidine nucleotide biosynthesis pathway. This chain is Aspartate carbamoyltransferase catalytic subunit, found in Clostridium perfringens (strain SM101 / Type A).